We begin with the raw amino-acid sequence, 400 residues long: Exodeoxyribonuclease 7 large subunit (400 aa).

It belongs to the XseA family. As to quaternary structure, heterooligomer composed of large and small subunits.

It localises to the cytoplasm. It carries out the reaction Exonucleolytic cleavage in either 5'- to 3'- or 3'- to 5'-direction to yield nucleoside 5'-phosphates.. Functionally, bidirectionally degrades single-stranded DNA into large acid-insoluble oligonucleotides, which are then degraded further into small acid-soluble oligonucleotides. The protein is Exodeoxyribonuclease 7 large subunit of Clostridium perfringens (strain ATCC 13124 / DSM 756 / JCM 1290 / NCIMB 6125 / NCTC 8237 / Type A).